Here is a 71-residue protein sequence, read N- to C-terminus: Protein SlyX homolog (71 aa).

The interval 52 to 71 (RLDQAESSAGAPANERPPHY) is disordered.

Belongs to the SlyX family.

This Rhodopseudomonas palustris (strain ATCC BAA-98 / CGA009) protein is Protein SlyX homolog.